The primary structure comprises 711 residues: Glycine--tRNA ligase beta subunit (711 aa).

Belongs to the class-II aminoacyl-tRNA synthetase family. As to quaternary structure, tetramer of two alpha and two beta subunits.

Its subcellular location is the cytoplasm. The enzyme catalyses tRNA(Gly) + glycine + ATP = glycyl-tRNA(Gly) + AMP + diphosphate. The protein is Glycine--tRNA ligase beta subunit of Polaromonas naphthalenivorans (strain CJ2).